Consider the following 174-residue polypeptide: Crossover junction endodeoxyribonuclease RuvC (174 aa).

Catalysis depends on residues aspartate 8, glutamate 67, and aspartate 139. The Mg(2+) site is built by aspartate 8, glutamate 67, and aspartate 139.

Belongs to the RuvC family. In terms of assembly, homodimer which binds Holliday junction (HJ) DNA. The HJ becomes 2-fold symmetrical on binding to RuvC with unstacked arms; it has a different conformation from HJ DNA in complex with RuvA. In the full resolvosome a probable DNA-RuvA(4)-RuvB(12)-RuvC(2) complex forms which resolves the HJ. The cofactor is Mg(2+).

The protein resides in the cytoplasm. It catalyses the reaction Endonucleolytic cleavage at a junction such as a reciprocal single-stranded crossover between two homologous DNA duplexes (Holliday junction).. In terms of biological role, the RuvA-RuvB-RuvC complex processes Holliday junction (HJ) DNA during genetic recombination and DNA repair. Endonuclease that resolves HJ intermediates. Cleaves cruciform DNA by making single-stranded nicks across the HJ at symmetrical positions within the homologous arms, yielding a 5'-phosphate and a 3'-hydroxyl group; requires a central core of homology in the junction. The consensus cleavage sequence is 5'-(A/T)TT(C/G)-3'. Cleavage occurs on the 3'-side of the TT dinucleotide at the point of strand exchange. HJ branch migration catalyzed by RuvA-RuvB allows RuvC to scan DNA until it finds its consensus sequence, where it cleaves and resolves the cruciform DNA. This is Crossover junction endodeoxyribonuclease RuvC from Pseudomonas putida (strain ATCC 47054 / DSM 6125 / CFBP 8728 / NCIMB 11950 / KT2440).